We begin with the raw amino-acid sequence, 557 residues long: uncharacterized protein (557 aa).

An N-terminal signal peptide occupies residues Met-1–Ala-30. Residue Cys-31 is the site of N-palmitoyl cysteine attachment. Cys-31 is lipidated: S-diacylglycerol cysteine.

It to M.bovis Mb2616c and M.leprae ML0489.

The protein localises to the cell membrane. This is an uncharacterized protein from Mycobacterium tuberculosis (strain CDC 1551 / Oshkosh).